Here is a 366-residue protein sequence, read N- to C-terminus: Galactoside alpha-(1,2)-fucosyltransferase 1 (366 aa).

At 1 to 8 the chain is on the cytoplasmic side; it reads MWPLSHRH. A helical; Signal-anchor for type II membrane protein membrane pass occupies residues 9 to 25; that stretch reads LCLAFLLVCVLSAISFF. Over 26–366 the chain is Lumenal; sequence LHVHQDSFRH…LSPLWTLAEP (341 aa). Asn-66, Asn-302, and Asn-328 each carry an N-linked (GlcNAc...) asparagine glycan.

Belongs to the glycosyltransferase 11 family.

The protein resides in the golgi apparatus. It is found in the golgi stack membrane. It carries out the reaction a beta-D-galactosyl-(1-&gt;4)-N-acetyl-beta-D-glucosaminyl derivative + GDP-beta-L-fucose = an alpha-L-Fuc-(1-&gt;2)-beta-D-Gal-(1-&gt;4)-beta-D-GlcNAc derivative + GDP + H(+). The enzyme catalyses a ganglioside GA1 + GDP-beta-L-fucose = a ganglioside Fuc-GA1 + GDP + H(+). The catalysed reaction is a beta-D-Gal-(1-&gt;3)-beta-D-GlcNAc-(1-&gt;3)-beta-D-Gal-(1-&gt;4)-beta-D-Glc-(1&lt;-&gt;1')-Cer(d18:1(4E)) + GDP-beta-L-fucose = alpha-L-fucosyl-(1-&gt;2)- beta-D-galactosyl-(1-&gt;3)-N-acetyl-beta-D-glucosaminyl-(1-&gt;3)-beta-D-galactosyl-(1-&gt;4)-beta-D-glucosyl-(1&lt;-&gt;1')-N-acylsphing-4-enine + GDP + H(+). It catalyses the reaction a neolactoside nLc4Cer(d18:1(4E)) + GDP-beta-L-fucose = a neolactoside IV(2)-alpha-Fuc-nLc4Cer(d18:1(4E)) + GDP + H(+). It carries out the reaction a ganglioside GM1 + GDP-beta-L-fucose = a ganglioside Fuc-GM1 + GDP + H(+). The enzyme catalyses beta-D-galactosyl-(1-&gt;3)-N-acetyl-D-galactosamine + GDP-beta-L-fucose = alpha-L-fucosyl-(1-&gt;2)-beta-D-galactosyl-(1-&gt;3)-N-acetyl-D-galactosamine + GDP + H(+). Its pathway is protein modification; protein glycosylation. In terms of biological role, catalyzes the transfer of L-fucose, from a guanosine diphosphate-beta-L-fucose, to the terminal galactose residue of glycoconjugates through an alpha(1,2) linkage leading to H antigen synthesis that is an intermediate substrate in the synthesis of ABO blood group antigens. H antigen is essential for maturation of the glomerular layer of the main olfactory bulb, in cell migration and early cell-cell contacts during tumor associated angiogenesis. Preferentially fucosylates soluble lactose and to a lesser extent fucosylates glycolipids gangliosides GA1 and GM1a. The polypeptide is Galactoside alpha-(1,2)-fucosyltransferase 1 (Alouatta caraya (Black howler monkey)).